Consider the following 128-residue polypeptide: B2 protein (128 aa).

An N-terminal signal peptide occupies residues Ser1 to Ala10. Cystine bridges form between Cys26–Cys57 and Cys97–Cys114.

This sequence belongs to the PBP/GOBP family. Post-translationally, N-glycosylated. In terms of tissue distribution, tubular accessory sex gland.

It is found in the secreted. In terms of biological role, may be a carrier protein for lipids. The protein is B2 protein of Tenebrio molitor (Yellow mealworm beetle).